Consider the following 176-residue polypeptide: Ribosome maturation factor RimM (176 aa).

Positions 97–176 constitute a PRC barrel domain; sequence EDEFYWRDLI…QILVDWDPDF (80 aa).

Belongs to the RimM family. Binds ribosomal protein uS19.

Its subcellular location is the cytoplasm. Its function is as follows. An accessory protein needed during the final step in the assembly of 30S ribosomal subunit, possibly for assembly of the head region. Essential for efficient processing of 16S rRNA. May be needed both before and after RbfA during the maturation of 16S rRNA. It has affinity for free ribosomal 30S subunits but not for 70S ribosomes. In Shewanella loihica (strain ATCC BAA-1088 / PV-4), this protein is Ribosome maturation factor RimM.